Consider the following 388-residue polypeptide: Integrase (388 aa).

The region spanning 70-151 (YTVADAVNDW…CLNRAVKRAM (82 aa)) is the Core-binding (CB) domain. Positions 173–379 (RPSKALTFAQ…VIQTGAVVMD (207 aa)) constitute a Tyr recombinase domain. Residues R208, K249, R330, and H353 contribute to the active site. Y363 serves as the catalytic O-(3'-phospho-DNA)-tyrosine intermediate.

The protein belongs to the 'phage' integrase family.

In terms of biological role, required for integration of pSAM2. The sequence is that of Integrase (int) from Streptomyces ambofaciens.